The chain runs to 86 residues: Protein K3 homolog (86 aa).

Residues 15–86 (NINDITQGII…LKGYIDVSIV (72 aa)) enclose the S1 motif domain.

Belongs to the poxviridae K3 protein family. Interacts with host PKR kinase.

Its function is as follows. Viral mimic of eIF-2-alpha that acts as a pseudosubstrate for EIF2AK2/PKR kinase. Inhibits therefore eIF-2-alpha phosphorylation by host EIF2AK2/PKR kinase and prevents protein synthesis shutoff. In Sus scrofa (Pig), this protein is Protein K3 homolog.